We begin with the raw amino-acid sequence, 182 residues long: MASSMLSTATVASINRVSPAQATMVAPFTGLKSTPVFPTTRKTNSDITSITSNGGKVQCMKVWPTLGMKKFETLSYLPPLTREQLASEVEYLLRSGWIPCLEFELEHGLVYREHARVPGYYDGRYWTMWKLPMFGCTDAAQVLKELDELIKHHPDGYARIIGFDNVRQVQCISFLAYKPPGA.

A chloroplast-targeting transit peptide spans 1-58; the sequence is MASSMLSTATVASINRVSPAQATMVAPFTGLKSTPVFPTTRKTNSDITSITSNGGKVQ.

It belongs to the RuBisCO small chain family. As to quaternary structure, heterohexadecamer of 8 large and 8 small subunits.

It localises to the plastid. The protein localises to the chloroplast. RuBisCO catalyzes two reactions: the carboxylation of D-ribulose 1,5-bisphosphate, the primary event in carbon dioxide fixation, as well as the oxidative fragmentation of the pentose substrate. Both reactions occur simultaneously and in competition at the same active site. Although the small subunit is not catalytic it is essential for maximal activity. This chain is Ribulose bisphosphate carboxylase small subunit, chloroplastic, found in Manihot esculenta (Cassava).